The sequence spans 276 residues: Apulose-4-phosphate transketolase subunit A (276 aa).

It belongs to the transketolase family. As to quaternary structure, probable heterodimer composed of AptA and AptB. Thiamine diphosphate serves as cofactor.

It carries out the reaction apulose 4-phosphate + D-glyceraldehyde 3-phosphate = D-xylulose 5-phosphate + dihydroxyacetone phosphate. It participates in carbohydrate metabolism. Its function is as follows. Involved in catabolism of D-apiose. Catalyzes the transfer of the glycolaldehyde group from apulose-4-phosphate to D-glyceraldehyde 3-phosphate, generating dihydroxyacetone phosphate and D-xylulose-5-phosphate. In Actinobacillus succinogenes (strain ATCC 55618 / DSM 22257 / CCUG 43843 / 130Z), this protein is Apulose-4-phosphate transketolase subunit A.